The chain runs to 120 residues: Large ribosomal subunit protein bL36m (120 aa).

This sequence belongs to the bacterial ribosomal protein bL36 family. Component of the mitochondrial ribosome large subunit (39S) which comprises a 16S rRNA and about 50 distinct proteins.

It is found in the mitochondrion. This chain is Large ribosomal subunit protein bL36m (mrpl36), found in Osmerus mordax (Rainbow smelt).